We begin with the raw amino-acid sequence, 156 residues long: Small ribosomal subunit protein uS7 (156 aa).

It belongs to the universal ribosomal protein uS7 family. Part of the 30S ribosomal subunit. Contacts proteins S9 and S11.

Functionally, one of the primary rRNA binding proteins, it binds directly to 16S rRNA where it nucleates assembly of the head domain of the 30S subunit. Is located at the subunit interface close to the decoding center, probably blocks exit of the E-site tRNA. This Treponema pallidum (strain Nichols) protein is Small ribosomal subunit protein uS7.